The sequence spans 697 residues: MFS antiporter QDR3 (697 aa).

Over 1–141 (MSHSPNLSPQ…ARDYPNKIKY (141 aa)) the chain is Cytoplasmic. Residues 38–109 (HPIGHHGREQ…KPTSTSIKTN (72 aa)) form a disordered region. 2 stretches are compositionally biased toward low complexity: residues 53–69 (NTTK…HTTT) and 85–99 (DLSS…YLSQ). A helical transmembrane segment spans residues 142-162 (LIVFIIAFASLAGPFGTSVML). Topologically, residues 163-180 (PAIDDIVNDLNTNVSTVN) are extracellular. 2 N-linked (GlcNAc...) asparagine glycosylation sites follow: Asn175 and Asn180. The chain crosses the membrane as a helical span at residues 181–201 (VSVGIYLLSLGIFPLWWSSFS). At 202–215 (ERFGRRSVYMVSFT) the chain is on the cytoplasmic side. A helical membrane pass occupies residues 216–236 (LFVAFSIGTALSPNIAALIVL). Topologically, residues 237 to 240 (RVLQ) are extracellular. The chain crosses the membrane as a helical span at residues 241-261 (GGSSASVQAVGAGTIADLFIP). At 262 to 268 (QERGQAM) the chain is on the cytoplasmic side. The chain crosses the membrane as a helical span at residues 269 to 289 (GLYYLGPLAGPFLAPILGGAV). Over 290–296 (SQAWGWR) the chain is Extracellular. The helical transmembrane segment at 297 to 317 (ATQWLLMIISACSFVLITFFL) threads the bilayer. The Cytoplasmic segment spans residues 318 to 485 (PETLRRVDTI…SIILLKHPPV (168 aa)). The tract at residues 338 to 367 (DNNGSQNEKIHDDFAGADNSSVHDIDGNPI) is disordered. Residues 486–506 (VLVISFSAISFAAIYFFNMAI) form a helical membrane-spanning segment. Residues 507–519 (SYEYARSPYNFSS) are Extracellular-facing. N-linked (GlcNAc...) asparagine glycosylation is present at Asn516. A helical membrane pass occupies residues 520–540 (VILGLMYIPNSVTYFMASIIG). Topologically, residues 541–565 (GKWNDRLLNRYAQKHGELVPESRLS) are cytoplasmic. The helical transmembrane segment at 566 to 586 (WNIVVAIILYPMACLIFGWTI) threads the bilayer. Residues 587–590 (KYRE) lie on the Extracellular side of the membrane. The helical transmembrane segment at 591–611 (FWVIPLIGTALFGFASMLVIG) threads the bilayer. Topologically, residues 612-626 (ATVTYLVDSLPGKGA) are cytoplasmic. The helical transmembrane segment at 627-647 (TGVALNNLIRQILAAIATFIV) threads the bilayer. Over 648–653 (EPLLRA) the chain is Extracellular. A helical membrane pass occupies residues 654-674 (IGAGVLFSIIAGILLVSSLVL). The Cytoplasmic segment spans residues 675–697 (LYLKKRGAFFREHYDVMDLYAKL).

Belongs to the major facilitator superfamily. CAR1 family.

It localises to the cell membrane. Functionally, MFS antiporter that does not display functional linkage as drug transporter and performs functions that significantly affect biofilm development and virulence. No substrate for transport has been identified yet, but plays an important role in the growth in the host. In Candida albicans (strain SC5314 / ATCC MYA-2876) (Yeast), this protein is MFS antiporter QDR3 (QDR3).